We begin with the raw amino-acid sequence, 74 residues long: MSLVVQCPICQSSVPWTDDAKFKPFCSERCKLIDLGDWASEKHVIPVKSPFEAGLLDPDLLDDAGFEQDDFFKE.

Zn(2+)-binding residues include cysteine 7, cysteine 10, cysteine 26, and cysteine 30.

Belongs to the DNA gyrase inhibitor YacG family. Interacts with GyrB. Zn(2+) is required as a cofactor.

Functionally, inhibits all the catalytic activities of DNA gyrase by preventing its interaction with DNA. Acts by binding directly to the C-terminal domain of GyrB, which probably disrupts DNA binding by the gyrase. The protein is DNA gyrase inhibitor YacG of Shewanella denitrificans (strain OS217 / ATCC BAA-1090 / DSM 15013).